The following is a 704-amino-acid chain: SH3KBP1-binding protein 1 (704 aa).

At alanine 2 the chain carries N-acetylalanine. Positions 19 to 88 (EVIHLNVGGK…LRTKELDPRG (70 aa)) constitute a BTB domain. The disordered stretch occupies residues 146–165 (VGPQQIGGRPAPVRRSNTMP). At threonine 163 the chain carries Phosphothreonine. WD repeat units lie at residues 233–280 (RLDW…GGSE), 283–322 (VFHL…WQVQ), 324–359 (VQPI…LRMK), 428–466 (VHRS…GMIS), and 548–586 (LECE…DGLG). The disordered stretch occupies residues 609-704 (PLTSSRASFP…PKNTLNETSF (96 aa)). The segment covering 611–631 (TSSRASFPSPSPRTSLTSLHS) has biased composition (low complexity). The short motif at 618–623 (PSPSPR) is the PXXXPR element. Phosphoserine is present on residues serine 644 and serine 646. The PXXXPR signature appears at 678–683 (PTPAPR).

This sequence belongs to the KCTD3 family. Monomer. Interacts with CUL3; interaction is direct and forms a 5:5 heterodecamer. Interacts (via PXXXPR motifs) with SH3KBP1 (via SH3 domains). Directly interacts with cathepsin B/CTSB.

The protein localises to the lysosome. In terms of biological role, inhibits CBL-SH3KBP1 complex mediated down-regulation of EGFR signaling by sequestration of SH3KBP1. Binds to SH3KBP1 and prevents its interaction with CBL and inhibits translocation of SH3KBP1 to EGFR containing vesicles upon EGF stimulation. In Rattus norvegicus (Rat), this protein is SH3KBP1-binding protein 1 (Shkbp1).